Consider the following 361-residue polypeptide: Trans-2,3-enoyl-CoA reductase-like (361 aa).

Ser-33 and Ser-35 each carry phosphoserine. 4 consecutive transmembrane segments (helical) span residues Val-139–Phe-159, Val-181–Phe-201, Leu-215–His-235, and Ile-309–Ile-329.

Belongs to the steroid 5-alpha reductase family. Expression is highest in the heart with very low to almost undetectable levels in brain, skeletal muscle, stomach, pancreas, liver, kidney, small intestine, and uterus.

It is found in the membrane. The protein localises to the endoplasmic reticulum. In Mus musculus (Mouse), this protein is Trans-2,3-enoyl-CoA reductase-like (Tecrl).